We begin with the raw amino-acid sequence, 251 residues long: Flap endonuclease Xni (251 aa).

Asp-104 provides a ligand contact to Mg(2+). The 5'-3' exonuclease domain occupies 160–249 (VLPQQLPDYW…IDGNLQQLRL (90 aa)). 5 residues coordinate K(+): Leu-171, Ala-172, Pro-180, Val-182, and Ile-185. The tract at residues 184–189 (GIGPKS) is interaction with DNA.

The protein belongs to the Xni family. It depends on Mg(2+) as a cofactor. K(+) is required as a cofactor.

In terms of biological role, has flap endonuclease activity. During DNA replication, flap endonucleases cleave the 5'-overhanging flap structure that is generated by displacement synthesis when DNA polymerase encounters the 5'-end of a downstream Okazaki fragment. This is Flap endonuclease Xni from Citrobacter koseri (strain ATCC BAA-895 / CDC 4225-83 / SGSC4696).